Reading from the N-terminus, the 231-residue chain is UPF0758 protein RBAM_025090 (231 aa).

The MPN domain occupies 109–231 (VIRSPEDGAK…FVSLKEKGYL (123 aa)). 3 residues coordinate Zn(2+): His-180, His-182, and Asp-193. Positions 180–193 (HNHPSGDPTPSRED) match the JAMM motif motif.

This sequence belongs to the UPF0758 family.

The sequence is that of UPF0758 protein RBAM_025090 from Bacillus velezensis (strain DSM 23117 / BGSC 10A6 / LMG 26770 / FZB42) (Bacillus amyloliquefaciens subsp. plantarum).